The primary structure comprises 130 residues: Small ribosomal subunit protein uS8 (130 aa).

It belongs to the universal ribosomal protein uS8 family. As to quaternary structure, part of the 30S ribosomal subunit. Contacts proteins S5 and S12.

One of the primary rRNA binding proteins, it binds directly to 16S rRNA central domain where it helps coordinate assembly of the platform of the 30S subunit. The polypeptide is Small ribosomal subunit protein uS8 (Buchnera aphidicola subsp. Baizongia pistaciae (strain Bp)).